Consider the following 244-residue polypeptide: Phosphoadenosine 5'-phosphosulfate reductase (244 aa).

Cys-239 acts as the Nucleophile; cysteine thiosulfonate intermediate in catalysis.

Belongs to the PAPS reductase family. CysH subfamily.

The protein resides in the cytoplasm. It catalyses the reaction [thioredoxin]-disulfide + sulfite + adenosine 3',5'-bisphosphate + 2 H(+) = [thioredoxin]-dithiol + 3'-phosphoadenylyl sulfate. The protein operates within sulfur metabolism; hydrogen sulfide biosynthesis; sulfite from sulfate: step 3/3. Functionally, catalyzes the formation of sulfite from phosphoadenosine 5'-phosphosulfate (PAPS) using thioredoxin as an electron donor. This Shigella flexneri serotype 5b (strain 8401) protein is Phosphoadenosine 5'-phosphosulfate reductase.